The primary structure comprises 307 residues: N-acetylmuramic acid 6-phosphate etherase (307 aa).

Residues 59 to 222 (TADRLRQGGR…STGVMVKLGK (164 aa)) enclose the SIS domain. Catalysis depends on E87, which acts as the Proton donor. E118 is an active-site residue.

The protein belongs to the GCKR-like family. MurNAc-6-P etherase subfamily. As to quaternary structure, homodimer.

The catalysed reaction is N-acetyl-D-muramate 6-phosphate + H2O = N-acetyl-D-glucosamine 6-phosphate + (R)-lactate. Its pathway is amino-sugar metabolism; N-acetylmuramate degradation. Specifically catalyzes the cleavage of the D-lactyl ether substituent of MurNAc 6-phosphate, producing GlcNAc 6-phosphate and D-lactate. The chain is N-acetylmuramic acid 6-phosphate etherase from Trichormus variabilis (strain ATCC 29413 / PCC 7937) (Anabaena variabilis).